We begin with the raw amino-acid sequence, 152 residues long: UPF0266 membrane protein PM0830 (152 aa).

The next 3 helical transmembrane spans lie at 1–21 (MMIINVLLCLGIFCFLLYAFY), 45–65 (KDALIFSLLIGIIIYQTYTNL), and 66–86 (SSATLYLLTALILLSVYAAFI).

Belongs to the UPF0266 family.

It is found in the cell inner membrane. This Pasteurella multocida (strain Pm70) protein is UPF0266 membrane protein PM0830.